The following is an 883-amino-acid chain: Alanine--tRNA ligase (883 aa).

Residues His-570, His-574, Cys-672, and His-676 each coordinate Zn(2+).

Belongs to the class-II aminoacyl-tRNA synthetase family. It depends on Zn(2+) as a cofactor.

It localises to the cytoplasm. The enzyme catalyses tRNA(Ala) + L-alanine + ATP = L-alanyl-tRNA(Ala) + AMP + diphosphate. Catalyzes the attachment of alanine to tRNA(Ala) in a two-step reaction: alanine is first activated by ATP to form Ala-AMP and then transferred to the acceptor end of tRNA(Ala). Also edits incorrectly charged Ser-tRNA(Ala) and Gly-tRNA(Ala) via its editing domain. The polypeptide is Alanine--tRNA ligase (Heliobacterium modesticaldum (strain ATCC 51547 / Ice1)).